Here is a 119-residue protein sequence, read N- to C-terminus: Ribonuclease P protein component (119 aa).

It belongs to the RnpA family. In terms of assembly, consists of a catalytic RNA component (M1 or rnpB) and a protein subunit.

The catalysed reaction is Endonucleolytic cleavage of RNA, removing 5'-extranucleotides from tRNA precursor.. RNaseP catalyzes the removal of the 5'-leader sequence from pre-tRNA to produce the mature 5'-terminus. It can also cleave other RNA substrates such as 4.5S RNA. The protein component plays an auxiliary but essential role in vivo by binding to the 5'-leader sequence and broadening the substrate specificity of the ribozyme. This chain is Ribonuclease P protein component, found in Yersinia pseudotuberculosis serotype O:1b (strain IP 31758).